We begin with the raw amino-acid sequence, 46 residues long: Esculentin-1SEb (46 aa).

Cys-40 and Cys-46 are disulfide-bonded.

In terms of tissue distribution, expressed by the skin glands.

Its subcellular location is the secreted. Functionally, mast cell degranulating peptide. Causes histamine release from rat peritoneal mast cells in vitro. Has antibacterial activity against the Gram-negative bacterium E.coli K12 and Gram-positive bacterium M.luteus NCT C2665. In Lithobates sevosus (Dusky gopher frog), this protein is Esculentin-1SEb.